We begin with the raw amino-acid sequence, 150 residues long: D-aminoacyl-tRNA deacylase (150 aa).

Positions 138–139 (GP) match the Gly-cisPro motif, important for rejection of L-amino acids motif.

It belongs to the DTD family. As to quaternary structure, homodimer.

The protein resides in the cytoplasm. It catalyses the reaction glycyl-tRNA(Ala) + H2O = tRNA(Ala) + glycine + H(+). The catalysed reaction is a D-aminoacyl-tRNA + H2O = a tRNA + a D-alpha-amino acid + H(+). Functionally, an aminoacyl-tRNA editing enzyme that deacylates mischarged D-aminoacyl-tRNAs. Also deacylates mischarged glycyl-tRNA(Ala), protecting cells against glycine mischarging by AlaRS. Acts via tRNA-based rather than protein-based catalysis; rejects L-amino acids rather than detecting D-amino acids in the active site. By recycling D-aminoacyl-tRNA to D-amino acids and free tRNA molecules, this enzyme counteracts the toxicity associated with the formation of D-aminoacyl-tRNA entities in vivo and helps enforce protein L-homochirality. The polypeptide is D-aminoacyl-tRNA deacylase (Natranaerobius thermophilus (strain ATCC BAA-1301 / DSM 18059 / JW/NM-WN-LF)).